A 466-amino-acid polypeptide reads, in one-letter code: Metaxin-1 (466 aa).

The span at 1-19 shows a compositional bias: low complexity; the sequence is MLLGGPPRSPRSGTSPKGP. Residues 1–133 form a disordered region; sequence MLLGGPPRSP…AVAGGGPRQG (133 aa). The segment covering 20-36 has biased composition (polar residues); the sequence is WSSTGHVQFGKSPQTWP. The span at 90-110 shows a compositional bias: low complexity; the sequence is ARGPVPRSSAASRARRSLASP. Residues K187, K190, K227, and K317 each participate in a glycyl lysine isopeptide (Lys-Gly) (interchain with G-Cter in ubiquitin) cross-link. Residues 421–441 traverse the membrane as a helical segment; the sequence is ILSVLAGLAAMVGYALLSGIV.

The protein belongs to the metaxin family. In terms of assembly, interacts with MTX2/metaxin-2. Associates with the mitochondrial contact site and cristae organizing system (MICOS) complex, composed of at least MICOS10/MIC10, CHCHD3/MIC19, CHCHD6/MIC25, APOOL/MIC27, IMMT/MIC60, APOO/MIC23/MIC26 and QIL1/MIC13. This complex was also known under the names MINOS or MitOS complex. The MICOS complex associates with mitochondrial outer membrane proteins SAMM50, MTX1 and MTX2 (together described as components of the mitochondrial outer membrane sorting assembly machinery (SAM) complex) and DNAJC11, mitochondrial inner membrane protein TMEM11 and with HSPA9. The MICOS and SAM complexes together with DNAJC11 are part of a large protein complex spanning both membranes termed the mitochondrial intermembrane space bridging (MIB) complex. Interacts with ARMC1. In terms of processing, ubiquitinated by PRKN during mitophagy, leading to its degradation and enhancement of mitophagy. Deubiquitinated by USP30.

The protein localises to the membrane. Its subcellular location is the mitochondrion outer membrane. Functionally, involved in transport of proteins into the mitochondrion. Essential for embryonic development. This is Metaxin-1 (MTX1) from Homo sapiens (Human).